Consider the following 141-residue polypeptide: Large-conductance mechanosensitive channel (141 aa).

2 helical membrane-spanning segments follow: residues 16 to 36 (VVDL…VSSM) and 83 to 103 (GNFI…FLMV).

The protein belongs to the MscL family. In terms of assembly, homopentamer.

It localises to the cell inner membrane. Its function is as follows. Channel that opens in response to stretch forces in the membrane lipid bilayer. May participate in the regulation of osmotic pressure changes within the cell. This chain is Large-conductance mechanosensitive channel, found in Cytophaga hutchinsonii (strain ATCC 33406 / DSM 1761 / CIP 103989 / NBRC 15051 / NCIMB 9469 / D465).